The sequence spans 279 residues: Bifunctional protein FolD 1 (279 aa).

NADP(+) contacts are provided by residues 166 to 168 and serine 191; that span reads GRS.

It belongs to the tetrahydrofolate dehydrogenase/cyclohydrolase family. In terms of assembly, homodimer.

The catalysed reaction is (6R)-5,10-methylene-5,6,7,8-tetrahydrofolate + NADP(+) = (6R)-5,10-methenyltetrahydrofolate + NADPH. It catalyses the reaction (6R)-5,10-methenyltetrahydrofolate + H2O = (6R)-10-formyltetrahydrofolate + H(+). It participates in one-carbon metabolism; tetrahydrofolate interconversion. Its function is as follows. Catalyzes the oxidation of 5,10-methylenetetrahydrofolate to 5,10-methenyltetrahydrofolate and then the hydrolysis of 5,10-methenyltetrahydrofolate to 10-formyltetrahydrofolate. In Salinispora arenicola (strain CNS-205), this protein is Bifunctional protein FolD 1.